Consider the following 242-residue polypeptide: TGACG-sequence-specific DNA-binding protein TGA-1B (242 aa).

Positions 1-125 (EFCDFSGNQA…HSSPNFENNS (125 aa)) are disordered. Residues 18–45 (DTSSPELRQSSSGSDVLNATSSTSSHQV) show a composition bias toward polar residues. Residues 66–79 (EGSRESANDNKGLG) show a composition bias toward basic and acidic residues. Over residues 88–125 (SPESQGSGNYGSNVSEGLNYPSDSNKSVHSSPNFENNS) the composition is skewed to polar residues. One can recognise a bZIP domain in the interval 183 to 242 (DEKKRARLVRNRESAQLSRQRKKHYVEELEDKVRIMHSTIQDLNAKVAYIIAENATLKTQ). Positions 185 to 216 (KKRARLVRNRESAQLSRQRKKHYVEELEDKVR) are basic motif. Residues 225 to 239 (LNAKVAYIIAENATL) form a leucine-zipper region.

The protein belongs to the bZIP family.

The protein localises to the nucleus. Its function is as follows. Binds specifically to the DNA sequence 5'-TGACG-3'. The protein is TGACG-sequence-specific DNA-binding protein TGA-1B (TGA1B) of Nicotiana tabacum (Common tobacco).